The following is a 413-amino-acid chain: Lamin tail domain-containing protein 1 (413 aa).

Disordered stretches follow at residues 1–25 and 102–128; these read MMKEASEPLASVTSINKQDSKVQDG and HKDSSLGKQSTSSMVPRRQPQSSSDVD. Positions 107 to 128 are enriched in polar residues; sequence LGKQSTSSMVPRRQPQSSSDVD. The LTD domain occupies 169–287; the sequence is EVGQFTSSSL…EAIAWYTPIH (119 aa). The tract at residues 356–413 is disordered; that stretch reads LPNKSPWCRNPNTSPHPYSSLIDSHDSDISESSLDTQLKPQPTKPKPDPGTKKKKAKS. The span at 385-396 shows a compositional bias: low complexity; that stretch reads SESSLDTQLKPQ.

The protein belongs to the intermediate filament family.

The protein is Lamin tail domain-containing protein 1 (Lmntd1) of Mus musculus (Mouse).